The sequence spans 474 residues: GTPase Der (474 aa).

EngA-type G domains lie at 3-167 and 204-379; these read LTIA…GSER and IRIA…RVWN. Residues 9–16, 56–60, 119–122, 210–217, 257–261, and 322–325 each bind GTP; these read GRPNVGKS, DTAGL, NKSE, GRPNTGKS, and NKWD. Residues 380 to 464 enclose the KH-like domain; it reads RRISTAKLNQ…PVRLSLRASD (85 aa).

It belongs to the TRAFAC class TrmE-Era-EngA-EngB-Septin-like GTPase superfamily. EngA (Der) GTPase family. In terms of assembly, associates with the 50S ribosomal subunit.

GTPase that plays an essential role in the late steps of ribosome biogenesis. The polypeptide is GTPase Der (Bartonella tribocorum (strain CIP 105476 / IBS 506)).